Here is a 672-residue protein sequence, read N- to C-terminus: Bifunctional polymyxin resistance protein ArnA (672 aa).

The tract at residues 1–310 (MKAIVFAYHD…EMGMVPQAKL (310 aa)) is formyltransferase ArnAFT. His-104 functions as the Proton donor; for formyltransferase activity in the catalytic mechanism. Residues Arg-114 and 136–140 (VSRAD) contribute to the (6R)-10-formyltetrahydrofolate site. The tract at residues 320-672 (RRTRVLILGV…HADNVTDTQG (353 aa)) is dehydrogenase ArnADH. NAD(+) contacts are provided by residues Asp-353 and 374 to 375 (DI). UDP-alpha-D-glucuronate contacts are provided by residues Ala-399, Tyr-404, and 438–439 (TS). The active-site Proton acceptor; for decarboxylase activity is Glu-440. UDP-alpha-D-glucuronate-binding positions include Arg-466, Asn-498, 532–541 (KLVDGGAQKR), and Tyr-619. Arg-625 (proton donor; for decarboxylase activity) is an active-site residue.

In the N-terminal section; belongs to the Fmt family. UDP-L-Ara4N formyltransferase subfamily. This sequence in the C-terminal section; belongs to the NAD(P)-dependent epimerase/dehydratase family. UDP-glucuronic acid decarboxylase subfamily. In terms of assembly, homohexamer, formed by a dimer of trimers.

The enzyme catalyses UDP-alpha-D-glucuronate + NAD(+) = UDP-beta-L-threo-pentopyranos-4-ulose + CO2 + NADH. The catalysed reaction is UDP-4-amino-4-deoxy-beta-L-arabinose + (6R)-10-formyltetrahydrofolate = UDP-4-deoxy-4-formamido-beta-L-arabinose + (6S)-5,6,7,8-tetrahydrofolate + H(+). Its pathway is nucleotide-sugar biosynthesis; UDP-4-deoxy-4-formamido-beta-L-arabinose biosynthesis; UDP-4-deoxy-4-formamido-beta-L-arabinose from UDP-alpha-D-glucuronate: step 1/3. The protein operates within nucleotide-sugar biosynthesis; UDP-4-deoxy-4-formamido-beta-L-arabinose biosynthesis; UDP-4-deoxy-4-formamido-beta-L-arabinose from UDP-alpha-D-glucuronate: step 3/3. It functions in the pathway bacterial outer membrane biogenesis; lipopolysaccharide biosynthesis. Bifunctional enzyme that catalyzes the oxidative decarboxylation of UDP-glucuronic acid (UDP-GlcUA) to UDP-4-keto-arabinose (UDP-Ara4O) and the addition of a formyl group to UDP-4-amino-4-deoxy-L-arabinose (UDP-L-Ara4N) to form UDP-L-4-formamido-arabinose (UDP-L-Ara4FN). The modified arabinose is attached to lipid A and is required for resistance to polymyxin and cationic antimicrobial peptides. This is Bifunctional polymyxin resistance protein ArnA from Pectobacterium carotovorum subsp. carotovorum (strain PC1).